The chain runs to 293 residues: MSPAPTTSAGPASSGIPPSSLPTSTVTEDDTKPSSSSSKANDLLPRYLTNDPSRTGYDPSIQWWMNYFKILTGQITPEGVEHYREDRYKANEARDCARCEADRDWLFQNSPVIRFLREKVANLNGVLDETNVVCRRCPSRIVVIPGNKEKGEEDRIEVARQGGGFSPDHGILLCANEMRNRGHLEDTLAHEMVHAWDHLRWKVDWFGEKSLRHAACTEIRASMLSGECRWTRESIVRGNWTLTQQFQNCVRMRAIQSVMARPTCKDDVHATKVVNEVWDSCFSDKRPFEEIYR.

Positions Met1–Asp51 are disordered. Residues Ser8 to Pro22 show a composition bias toward low complexity. Residue His190 coordinates a divalent metal cation. The active site involves Glu191. Position 194 (His194) interacts with a divalent metal cation.

It belongs to the peptidase M76 family.

Its subcellular location is the mitochondrion inner membrane. In terms of biological role, has a dual role in the assembly of mitochondrial ATPase. Acts as a protease that removes N-terminal residues of mitochondrial ATPase CF(0) subunit 6 at the intermembrane space side. Also involved in the correct assembly of the membrane-embedded ATPase CF(0) particle, probably mediating association of subunit 6 with the subunit 9 ring. The sequence is that of Mitochondrial inner membrane protease atp23 (atp23) from Neurospora crassa (strain ATCC 24698 / 74-OR23-1A / CBS 708.71 / DSM 1257 / FGSC 987).